The primary structure comprises 209 residues: Probable glutathione peroxidase 8-B (209 aa).

The chain crosses the membrane as a helical span at residues 18-40 (VFLVFFSMVLCTGILCVLQLKFL). Residue cysteine 79 is part of the active site.

The protein belongs to the glutathione peroxidase family.

The protein resides in the membrane. The enzyme catalyses 2 glutathione + H2O2 = glutathione disulfide + 2 H2O. The polypeptide is Probable glutathione peroxidase 8-B (gpx8-b) (Xenopus laevis (African clawed frog)).